A 495-amino-acid polypeptide reads, in one-letter code: Cobyric acid synthase (495 aa).

Positions 256–444 (KVNVAVVLLR…VHGILDNPSV (189 aa)) constitute a GATase cobBQ-type domain. The active-site Nucleophile is the C337. H436 is an active-site residue.

This sequence belongs to the CobB/CobQ family. CobQ subfamily.

The protein operates within cofactor biosynthesis; adenosylcobalamin biosynthesis. Catalyzes amidations at positions B, D, E, and G on adenosylcobyrinic A,C-diamide. NH(2) groups are provided by glutamine, and one molecule of ATP is hydrogenolyzed for each amidation. The sequence is that of Cobyric acid synthase from Bacteroides fragilis (strain ATCC 25285 / DSM 2151 / CCUG 4856 / JCM 11019 / LMG 10263 / NCTC 9343 / Onslow / VPI 2553 / EN-2).